The primary structure comprises 514 residues: Xylose import ATP-binding protein XylG (514 aa).

2 consecutive ABC transporter domains span residues 7–246 (FEMR…VGRE) and 263–508 (LEAR…IHAE). 39 to 46 (GENGAGKS) is an ATP binding site.

It belongs to the ABC transporter superfamily. Xylose importer (TC 3.A.1.2.4) family. As to quaternary structure, the complex is composed of two ATP-binding proteins (XylG), two transmembrane proteins (XylH) and a solute-binding protein (XylF).

The protein localises to the cell inner membrane. It carries out the reaction D-xylose(out) + ATP + H2O = D-xylose(in) + ADP + phosphate + H(+). Its function is as follows. Part of the ABC transporter complex XylFGH involved in xylose import. Responsible for energy coupling to the transport system. This is Xylose import ATP-binding protein XylG from Ralstonia nicotianae (strain ATCC BAA-1114 / GMI1000) (Ralstonia solanacearum).